Reading from the N-terminus, the 155-residue chain is Small ribosomal subunit protein uS7cz/uS7cy (155 aa).

It belongs to the universal ribosomal protein uS7 family. As to quaternary structure, part of the 30S ribosomal subunit.

The protein resides in the plastid. The protein localises to the chloroplast. Its function is as follows. One of the primary rRNA binding proteins, it binds directly to 16S rRNA where it nucleates assembly of the head domain of the 30S subunit. This chain is Small ribosomal subunit protein uS7cz/uS7cy (rps7-A), found in Drimys granadensis.